We begin with the raw amino-acid sequence, 1062 residues long: Isoleucine--tRNA ligase (1062 aa).

The short motif at proline 47–threonine 57 is the 'HIGH' region element. Residues lysine 591–serine 595 carry the 'KMSKS' region motif. Lysine 594 contacts ATP.

It belongs to the class-I aminoacyl-tRNA synthetase family. IleS type 2 subfamily. In terms of assembly, monomer. Zn(2+) is required as a cofactor.

The protein resides in the cytoplasm. The catalysed reaction is tRNA(Ile) + L-isoleucine + ATP = L-isoleucyl-tRNA(Ile) + AMP + diphosphate. In terms of biological role, catalyzes the attachment of isoleucine to tRNA(Ile). As IleRS can inadvertently accommodate and process structurally similar amino acids such as valine, to avoid such errors it has two additional distinct tRNA(Ile)-dependent editing activities. One activity is designated as 'pretransfer' editing and involves the hydrolysis of activated Val-AMP. The other activity is designated 'posttransfer' editing and involves deacylation of mischarged Val-tRNA(Ile). The sequence is that of Isoleucine--tRNA ligase from Methanospirillum hungatei JF-1 (strain ATCC 27890 / DSM 864 / NBRC 100397 / JF-1).